A 145-amino-acid chain; its full sequence is 3-hydroxyacyl-[acyl-carrier-protein] dehydratase FabZ (145 aa).

Residue His-49 is part of the active site.

The protein belongs to the thioester dehydratase family. FabZ subfamily.

The protein resides in the cytoplasm. It catalyses the reaction a (3R)-hydroxyacyl-[ACP] = a (2E)-enoyl-[ACP] + H2O. In terms of biological role, involved in unsaturated fatty acids biosynthesis. Catalyzes the dehydration of short chain beta-hydroxyacyl-ACPs and long chain saturated and unsaturated beta-hydroxyacyl-ACPs. In Ehrlichia ruminantium (strain Gardel), this protein is 3-hydroxyacyl-[acyl-carrier-protein] dehydratase FabZ.